A 453-amino-acid chain; its full sequence is MIPIIVLIGRTNVGKSTLFNVLTKTRDALVANYPGITRDRQYGYCKLQSNKKIILIDTAGLDIKLNEIEKQAQAQTLIAIKEAHLILFLVNARDGLMPQEYEISKNIRKYQKKTILVINKIDGINEASKINEFYSLGFEKIQKISASHNQGINTLINRYLIPWISEKFKKKITENLYKDTELKKIAIKVAFIGRPNVGKSTLINGILKEERMITSNTPGTTLDSISTPIKYNYENYTLIDTAGASKKKKKINDFQRFSIIKTLQTIEKSNVILLIIDASLQTCHQDLSLADFIIHSGKGIVVVVNKCDLFNSVELKKIKELIKSKLKFLYFSKIHFISALYKKGIFQLFKSIKESYEDSKRKISTSTLIRTMHIAIKKHQPPIIKGRRIKLKYAHLGSSNPPKIIIHGNQVKYLSLPYKRYLINFFYKTLKIKGTPIQIQFKDNENPYVKNKN.

EngA-type G domains follow at residues 3–167 (PIIV…ISEK) and 187–360 (IKVA…EDSK). GTP is bound by residues 9 to 16 (GRTNVGKS), 57 to 61 (DTAGL), 119 to 122 (NKID), 193 to 200 (GRPNVGKS), 240 to 244 (DTAGA), and 305 to 308 (NKCD). In terms of domain architecture, KH-like spans 361 to 445 (RKISTSTLIR…PIQIQFKDNE (85 aa)).

It belongs to the TRAFAC class TrmE-Era-EngA-EngB-Septin-like GTPase superfamily. EngA (Der) GTPase family. In terms of assembly, associates with the 50S ribosomal subunit.

GTPase that plays an essential role in the late steps of ribosome biogenesis. This Buchnera aphidicola subsp. Acyrthosiphon pisum (strain Tuc7) protein is GTPase Der.